The following is a 251-amino-acid chain: Geranylgeranylglyceryl phosphate synthase (251 aa).

Mg(2+) is bound by residues D25 and S54. Residues 173 to 179 (YLEAGSG), 204 to 205 (GG), and 226 to 227 (GT) contribute to the sn-glycerol 1-phosphate site.

The protein belongs to the GGGP/HepGP synthase family. Group II subfamily. Requires Mg(2+) as cofactor.

The protein resides in the cytoplasm. The enzyme catalyses sn-glycerol 1-phosphate + (2E,6E,10E)-geranylgeranyl diphosphate = sn-3-O-(geranylgeranyl)glycerol 1-phosphate + diphosphate. The protein operates within membrane lipid metabolism; glycerophospholipid metabolism. In terms of biological role, prenyltransferase that catalyzes the transfer of the geranylgeranyl moiety of geranylgeranyl diphosphate (GGPP) to the C3 hydroxyl of sn-glycerol-1-phosphate (G1P). This reaction is the first ether-bond-formation step in the biosynthesis of archaeal membrane lipids. In Pyrococcus furiosus (strain ATCC 43587 / DSM 3638 / JCM 8422 / Vc1), this protein is Geranylgeranylglyceryl phosphate synthase.